A 443-amino-acid chain; its full sequence is Protein king tubby (443 aa).

Disordered stretches follow at residues 57–80 (TNGSPGGINPVAMNTSRNHSNNMR) and 98–191 (HELE…EGDV). Positions 68–80 (AMNTSRNHSNNMR) are enriched in polar residues. Positions 113 to 128 (QHQQSASHSANSTQSQ) are enriched in low complexity. The residue at position 136 (serine 136) is a Phosphoserine. Residues 177 to 186 (NGTGNGTGGE) show a composition bias toward gly residues.

The protein belongs to the TUB family.

Its subcellular location is the cytoplasm. It is found in the nucleus. It localises to the cell projection. The protein localises to the cilium membrane. The protein resides in the rhabdomere. This is Protein king tubby from Drosophila simulans (Fruit fly).